The chain runs to 679 residues: Kelch-like protein diablo (679 aa).

A compositionally biased stretch (gly residues) spans 1–48; the sequence is MGDLPGGGGGAAGGAGAAGGGGGGGNGAAGSSSSGGGASGSGGGGPGS. Positions 1-84 are disordered; the sequence is MGDLPGGGGG…RLSHTSEKHP (84 aa). The 68-residue stretch at 101–168 folds into the BTB domain; that stretch reads CDVVLNVGGR…CYTAHIIVEE (68 aa). Positions 203 to 305 constitute a BACK domain; the sequence is CLGIRAFADT…SPKFLVGTVG (103 aa). Kelch repeat units lie at residues 352–398, 400–446, 447–493, 495–540, 542–587, and 588–634; these read VLFA…VLND, LYAV…VLDG, FLYA…VLGG, LYAI…VFNN, IYAV…VVNG, and QLYA…VMRA. Positions 643-679 are disordered; the sequence is CDNNSSNNNNNNYNLKHQQQQPQQQQQQQQQQTQQQL. Residues 645 to 679 are compositionally biased toward low complexity; that stretch reads NNSSNNNNNNYNLKHQQQQPQQQQQQQQQQTQQQL.

It participates in protein modification; protein ubiquitination. Probable substrate-specific adapter of an E3 ubiquitin-protein ligase complex which mediates the ubiquitination and subsequent proteasomal degradation of target proteins. May have a role in synapse differentiation and growth. The sequence is that of Kelch-like protein diablo from Drosophila willistoni (Fruit fly).